The sequence spans 428 residues: Elongation factor 1-alpha (428 aa).

The region spanning 5 to 217 (KPHVNIVFIG…DQIPEPEKPV (213 aa)) is the tr-type G domain. The tract at residues 14–21 (GHVDHGKS) is G1. 14-21 (GHVDHGKS) provides a ligand contact to GTP. Residue Ser21 participates in Mg(2+) binding. Positions 68–72 (GITID) are G2. The G3 stretch occupies residues 89–92 (DAPG). Residues 89–93 (DAPGH) and 144–147 (NKMD) contribute to the GTP site. The tract at residues 144–147 (NKMD) is G4. Positions 181-183 (SAW) are G5.

This sequence belongs to the TRAFAC class translation factor GTPase superfamily. Classic translation factor GTPase family. EF-Tu/EF-1A subfamily.

It localises to the cytoplasm. The catalysed reaction is GTP + H2O = GDP + phosphate + H(+). Its function is as follows. GTP hydrolase that promotes the GTP-dependent binding of aminoacyl-tRNA to the A-site of ribosomes during protein biosynthesis. The polypeptide is Elongation factor 1-alpha (Pyrococcus furiosus (strain ATCC 43587 / DSM 3638 / JCM 8422 / Vc1)).